Here is a 452-residue protein sequence, read N- to C-terminus: Growth/differentiation factor 6 (452 aa).

The first 22 residues, 1-22, serve as a signal peptide directing secretion; the sequence is MDTPRVLLWAIFLISFLWDLPG. A propeptide spanning residues 23–332 is cleaved from the precursor; that stretch reads FQQASISSSS…LPSPGRRRRR (310 aa). The disordered stretch occupies residues 29-93; that stretch reads SSSSSTELDS…QEPPGRGPRV (65 aa). Basic and acidic residues-rich tracts occupy residues 37-46 and 58-75; these read DSTKDVENRK and AEGRTPKEHRPRPNELRR. Asn-115 carries an N-linked (GlcNAc...) asparagine glycan. 2 disordered regions span residues 244–267 and 301–348; these read RDSGARPRGPQQSPPLDLRSLGFG and AEAA…KKSR. The span at 301–317 shows a compositional bias: low complexity; it reads AEAAGAEGSWPAPSGAP. A compositionally biased stretch (basic residues) spans 327–348; that stretch reads GRRRRRTALSSRHGKRHGKKSR. Disulfide bonds link Cys-351–Cys-417, Cys-380–Cys-449, and Cys-384–Cys-451.

Belongs to the TGF-beta family. In terms of assembly, homodimer; disulfide-linked.

Its subcellular location is the secreted. Functionally, growth factor that controls proliferation and cellular differentiation in the retina and bone formation. Plays a key role in regulating apoptosis during retinal development. Establishes dorsal-ventral positional information in the retina and controls the formation of the retinotectal map. Required for normal formation of bones and joints in the limbs, skull, digits and axial skeleton. Plays a key role in establishing boundaries between skeletal elements during development. Regulation of GDF6 expression seems to be a mechanism for evolving species-specific changes in skeletal structures. Seems to positively regulate differentiation of chondrogenic tissue through the growth factor receptors subunits BMPR1A, BMPR1B, BMPR2 and ACVR2A, leading to the activation of SMAD1-SMAD5-SMAD8 complex. The regulation of chondrogenic differentiation is inhibited by NOG. Also involved in the induction of adipogenesis from mesenchymal stem cells. This mechanism acts through the growth factor receptors subunits BMPR1A, BMPR2 and ACVR2A and the activation of SMAD1-SMAD5-SMAD8 complex and MAPK14/p38. The sequence is that of Growth/differentiation factor 6 (Gdf6) from Rattus norvegicus (Rat).